We begin with the raw amino-acid sequence, 255 residues long: Uracil-DNA glycosylase (255 aa).

The tract at residues 1 to 20 (MFSASTTPEQPLGLSGDATP) is disordered. Asp-99 (proton acceptor) is an active-site residue.

This sequence belongs to the uracil-DNA glycosylase (UDG) superfamily. UNG family.

It is found in the host nucleus. The enzyme catalyses Hydrolyzes single-stranded DNA or mismatched double-stranded DNA and polynucleotides, releasing free uracil.. Its function is as follows. Excises uracil residues from the DNA which can arise as a result of misincorporation of dUMP residues by DNA polymerase or deamination of cytosines. Therefore may reduce deleterious uracil incorporation into the viral genome, particularly in terminally differentiated cells which lack DNA repair enzymes. In Human herpesvirus 2 (strain HG52) (HHV-2), this protein is Uracil-DNA glycosylase.